The chain runs to 33 residues: Pheromone biosynthesis-activating neuropeptide (33 aa).

A disordered region spans residues 1–33 (LADDMPATMADQEVYRPEPEQIDSRNKYFSPRL). The span at 13–26 (EVYRPEPEQIDSRN) shows a compositional bias: basic and acidic residues. Leucine 33 is subject to Leucine amide.

This sequence belongs to the pyrokinin family.

The protein resides in the secreted. In terms of biological role, involved in the control of pheromone production in females. This chain is Pheromone biosynthesis-activating neuropeptide, found in Lymantria dispar (Gypsy moth).